We begin with the raw amino-acid sequence, 66 residues long: DNA gyrase inhibitor YacG (66 aa).

Positions 9, 12, 28, and 32 each coordinate Zn(2+).

This sequence belongs to the DNA gyrase inhibitor YacG family. As to quaternary structure, interacts with GyrB. Zn(2+) serves as cofactor.

In terms of biological role, inhibits all the catalytic activities of DNA gyrase by preventing its interaction with DNA. Acts by binding directly to the C-terminal domain of GyrB, which probably disrupts DNA binding by the gyrase. In Pseudomonas fluorescens (strain Pf0-1), this protein is DNA gyrase inhibitor YacG.